Consider the following 78-residue polypeptide: D-alanyl carrier protein (78 aa).

One can recognise a Carrier domain in the interval 1-78 (MDFKQEVLDV…NIVNQLSELK (78 aa)). Serine 36 bears the O-(pantetheine 4'-phosphoryl)serine mark.

It belongs to the DltC family. In terms of processing, 4'-phosphopantetheine is transferred from CoA to a specific serine of apo-DCP.

It localises to the cytoplasm. The protein operates within cell wall biogenesis; lipoteichoic acid biosynthesis. Functionally, carrier protein involved in the D-alanylation of lipoteichoic acid (LTA). The loading of thioester-linked D-alanine onto DltC is catalyzed by D-alanine--D-alanyl carrier protein ligase DltA. The DltC-carried D-alanyl group is further transferred to cell membrane phosphatidylglycerol (PG) by forming an ester bond, probably catalyzed by DltD. D-alanylation of LTA plays an important role in modulating the properties of the cell wall in Gram-positive bacteria, influencing the net charge of the cell wall. The protein is D-alanyl carrier protein of Bacillus subtilis (strain 168).